Here is a 676-residue protein sequence, read N- to C-terminus: E3 ubiquitin-protein ligase ICP0 (676 aa).

The RING-type zinc-finger motif lies at cysteine 13–lysine 52. Disordered stretches follow at residues aspartate 101–alanine 153, histidine 266–glutamine 517, and alanine 555–glutamine 676. Positions glutamate 123 to alanine 153 are enriched in gly residues. The span at serine 286–glutamate 303 shows a compositional bias: acidic residues. Positions serine 304–threonine 314 are enriched in low complexity. The segment covering alanine 315 to glutamate 328 has biased composition (acidic residues). The segment covering tyrosine 351–alanine 361 has biased composition (polar residues). Low complexity-rich tracts occupy residues glycine 375–serine 388 and leucine 397–alanine 411. Gly residues predominate over residues glycine 422 to serine 439. Residues glutamate 440–leucine 450 show a composition bias toward basic and acidic residues. Positions threonine 474–alanine 484 are enriched in pro residues. Low complexity predominate over residues alanine 555–proline 597.

The protein belongs to the simplexviruses ICp0 family. In terms of processing, auto-ubiquitinated. Transactivation activity is possibly regulated through phosphorylation by casein kinase II.

It carries out the reaction S-ubiquitinyl-[E2 ubiquitin-conjugating enzyme]-L-cysteine + [acceptor protein]-L-lysine = [E2 ubiquitin-conjugating enzyme]-L-cysteine + N(6)-ubiquitinyl-[acceptor protein]-L-lysine.. Its function is as follows. Evades nuclear antiviral defenses triggered by dsDNA viruses. Acts during the initial stages of lytic infection and the reactivation of latent viral genome. Prevents the antiviral effect of nuclear bodies by degrading host PML and SP100. This Bovine herpesvirus 1.1 (strain Cooper) (BoHV-1) protein is E3 ubiquitin-protein ligase ICP0 (BICP0).